A 351-amino-acid chain; its full sequence is ABC transporter nucleoside-binding protein BmpA (351 aa).

An N-terminal signal peptide occupies residues 1–21; that stretch reads MKKRVIAVSAIALASVAVLAG. Residue cysteine 22 is the site of N-palmitoyl cysteine attachment. Cysteine 22 is lipidated: S-diacylglycerol cysteine.

The protein belongs to the BMP lipoprotein family. As to quaternary structure, the complex is composed of two ATP-binding proteins (NupA), two transmembrane proteins (NupB and NupC) and a solute-binding protein (BmpA).

It is found in the cell membrane. Its function is as follows. Part of an ABC transporter complex involved in the uptake of all common nucleosides. The sequence is that of ABC transporter nucleoside-binding protein BmpA from Lactococcus lactis subsp. cremoris (strain MG1363).